Reading from the N-terminus, the 593-residue chain is Arginine--tRNA ligase (593 aa).

Positions 138–148 (ANPTGPLHVGH) match the 'HIGH' region motif.

This sequence belongs to the class-I aminoacyl-tRNA synthetase family. Monomer.

The protein resides in the cytoplasm. It carries out the reaction tRNA(Arg) + L-arginine + ATP = L-arginyl-tRNA(Arg) + AMP + diphosphate. The polypeptide is Arginine--tRNA ligase (Burkholderia cenocepacia (strain ATCC BAA-245 / DSM 16553 / LMG 16656 / NCTC 13227 / J2315 / CF5610) (Burkholderia cepacia (strain J2315))).